Reading from the N-terminus, the 286-residue chain is Shikimate dehydrogenase (NADP(+)) (286 aa).

Residues 22–24 (SRS) and T71 each bind shikimate. The active-site Proton acceptor is K75. E87 provides a ligand contact to NADP(+). Shikimate contacts are provided by N96 and D111. Residues 136–140 (GAGGA), 160–165 (NRTPER), and I225 contribute to the NADP(+) site. Y227 serves as a coordination point for shikimate. An NADP(+)-binding site is contributed by G248.

The protein belongs to the shikimate dehydrogenase family. Homodimer.

It catalyses the reaction shikimate + NADP(+) = 3-dehydroshikimate + NADPH + H(+). The protein operates within metabolic intermediate biosynthesis; chorismate biosynthesis; chorismate from D-erythrose 4-phosphate and phosphoenolpyruvate: step 4/7. In terms of biological role, involved in the biosynthesis of the chorismate, which leads to the biosynthesis of aromatic amino acids. Catalyzes the reversible NADPH linked reduction of 3-dehydroshikimate (DHSA) to yield shikimate (SA). The sequence is that of Shikimate dehydrogenase (NADP(+)) from Sinorhizobium medicae (strain WSM419) (Ensifer medicae).